Here is a 365-residue protein sequence, read N- to C-terminus: Peptide chain release factor 2 (365 aa).

Position 252 is an N5-methylglutamine (glutamine 252).

The protein belongs to the prokaryotic/mitochondrial release factor family. Methylated by PrmC. Methylation increases the termination efficiency of RF2.

It localises to the cytoplasm. Peptide chain release factor 2 directs the termination of translation in response to the peptide chain termination codons UGA and UAA. This chain is Peptide chain release factor 2, found in Klebsiella pneumoniae (strain 342).